The primary structure comprises 277 residues: NH(3)-dependent NAD(+) synthetase (277 aa).

Residue 47–54 (GISGGQDS) participates in ATP binding. Asp-53 contributes to the Mg(2+) binding site. Residue Arg-141 participates in deamido-NAD(+) binding. ATP is bound at residue Thr-161. Glu-166 lines the Mg(2+) pocket. Residues Lys-174 and Asp-181 each contribute to the deamido-NAD(+) site. Lys-190 and Thr-212 together coordinate ATP. 261–262 (HK) provides a ligand contact to deamido-NAD(+).

It belongs to the NAD synthetase family. In terms of assembly, homodimer.

The enzyme catalyses deamido-NAD(+) + NH4(+) + ATP = AMP + diphosphate + NAD(+) + H(+). Its pathway is cofactor biosynthesis; NAD(+) biosynthesis; NAD(+) from deamido-NAD(+) (ammonia route): step 1/1. Its function is as follows. Catalyzes the ATP-dependent amidation of deamido-NAD to form NAD. Uses ammonia as a nitrogen source. The chain is NH(3)-dependent NAD(+) synthetase from Lactobacillus johnsonii (strain CNCM I-12250 / La1 / NCC 533).